The chain runs to 231 residues: Thrombin-like enzyme leucurobin (231 aa).

A Peptidase S1 domain is found at 1–223 (VIGGDECDIN…YLPWIQSIIA (223 aa)). 6 disulfides stabilise this stretch: Cys-7-Cys-139, Cys-26-Cys-42, Cys-74-Cys-230, Cys-118-Cys-184, Cys-150-Cys-163, and Cys-174-Cys-199. Catalysis depends on charge relay system residues His-41 and Asp-86. Asn-146 carries an N-linked (GlcNAc...) asparagine glycan. The Charge relay system role is filled by Ser-178. Residue Asn-225 is glycosylated (N-linked (GlcNAc...) asparagine).

This sequence belongs to the peptidase S1 family. Snake venom subfamily. In terms of assembly, monomer. Glycosylated. Expressed by the venom gland.

The protein resides in the secreted. It carries out the reaction Selective cleavage of Arg-|-Xaa bond in fibrinogen, to form fibrin, and release fibrinopeptide A. The specificity of further degradation of fibrinogen varies with species origin of the enzyme.. With respect to regulation, inhibited by PMSF and benzamidine. Its clotting effect is strongly inhibited by antibothropic serum. Is not inhibited by heparin. Its function is as follows. Thrombin-like snake venom serine protease that cleaves Arg-Gly bonds in alpha-chain of fibrinogen (FGA). Induces temporary episodes of opisthotonos and rapid rolling around the long axis of the animal (gyroxin-like effect), when injected into the tail veins of mice (0.143 ug/g mouse). This Bothrops leucurus (Whitetail lancehead) protein is Thrombin-like enzyme leucurobin.